The chain runs to 512 residues: Nuclear fusion protein FUS1 (512 aa).

Residues 72 to 96 (IGLSIGLPIGIFCFGLLILLCYFYL) traverse the membrane as a helical segment. The interval 97 to 512 (KRNSVSISNP…VPGDCLQEYD (416 aa)) is hydrophilic. Thr-178 is subject to Phosphothreonine. Phosphoserine is present on residues Ser-190 and Ser-256. Residues Thr-281 and Thr-424 each carry the phosphothreonine modification. Residues 436–512 (QLGKTYTVIQ…VPGDCLQEYD (77 aa)) enclose the SH3 domain.

Post-translationally, O-glycosylated.

It localises to the membrane. Required for cell fusion. Negatively regulates Sho1p signaling to ensure efficient cell fusion. Functionally, interacts with SHO1. This is Nuclear fusion protein FUS1 (FUS1) from Saccharomyces cerevisiae (strain ATCC 204508 / S288c) (Baker's yeast).